Reading from the N-terminus, the 87-residue chain is Small ribosomal subunit protein uS17 (87 aa).

This sequence belongs to the universal ribosomal protein uS17 family. As to quaternary structure, part of the 30S ribosomal subunit.

Its function is as follows. One of the primary rRNA binding proteins, it binds specifically to the 5'-end of 16S ribosomal RNA. This is Small ribosomal subunit protein uS17 from Syntrophobacter fumaroxidans (strain DSM 10017 / MPOB).